The primary structure comprises 210 residues: Holliday junction resolvase RecU (210 aa).

Mg(2+)-binding residues include T87, D89, E102, and Q121.

It belongs to the RecU family. The cofactor is Mg(2+).

Its subcellular location is the cytoplasm. The catalysed reaction is Endonucleolytic cleavage at a junction such as a reciprocal single-stranded crossover between two homologous DNA duplexes (Holliday junction).. In terms of biological role, endonuclease that resolves Holliday junction intermediates in genetic recombination. Cleaves mobile four-strand junctions by introducing symmetrical nicks in paired strands. Promotes annealing of linear ssDNA with homologous dsDNA. Required for DNA repair, homologous recombination and chromosome segregation. The chain is Holliday junction resolvase RecU from Lactobacillus delbrueckii subsp. bulgaricus (strain ATCC 11842 / DSM 20081 / BCRC 10696 / JCM 1002 / NBRC 13953 / NCIMB 11778 / NCTC 12712 / WDCM 00102 / Lb 14).